The chain runs to 102 residues: MVYAIVRAGGRQEKVSVGDFVTLNRVAGGAGSTIELPALLLVDGDKITTAAADLAKVTVTAEILQDLRGPKIVIQKFKNKTGYKKRQGHRQELTKVKITGIK.

Belongs to the bacterial ribosomal protein bL21 family. In terms of assembly, part of the 50S ribosomal subunit. Contacts protein L20.

In terms of biological role, this protein binds to 23S rRNA in the presence of protein L20. This Pseudarthrobacter chlorophenolicus (strain ATCC 700700 / DSM 12829 / CIP 107037 / JCM 12360 / KCTC 9906 / NCIMB 13794 / A6) (Arthrobacter chlorophenolicus) protein is Large ribosomal subunit protein bL21.